Consider the following 256-residue polypeptide: tRNA pseudouridine synthase A (256 aa).

Asp-43 serves as the catalytic Nucleophile. Tyr-94 serves as a coordination point for substrate.

This sequence belongs to the tRNA pseudouridine synthase TruA family.

The enzyme catalyses uridine(38/39/40) in tRNA = pseudouridine(38/39/40) in tRNA. Functionally, formation of pseudouridine at positions 38, 39 and 40 in the anticodon stem and loop of transfer RNAs. In Pyrobaculum aerophilum (strain ATCC 51768 / DSM 7523 / JCM 9630 / CIP 104966 / NBRC 100827 / IM2), this protein is tRNA pseudouridine synthase A.